Reading from the N-terminus, the 85-residue chain is U4-theraphotoxin-Hhn1p (85 aa).

The N-terminal stretch at 1-22 (MKMTLIAIPTCAAVLVLHTTAA) is a signal peptide. Positions 23–48 (EELEAESQLMEVGMPDTELEAVDGER) are excised as a propeptide. Intrachain disulfides connect Cys-52-Cys-66, Cys-56-Cys-77, and Cys-71-Cys-82.

This sequence belongs to the neurotoxin 12 (Hwtx-2) family. 02 (Hwtx-2) subfamily. In terms of tissue distribution, expressed by the venom gland.

Its subcellular location is the secreted. Its function is as follows. Postsynaptic neurotoxin. The sequence is that of U4-theraphotoxin-Hhn1p from Cyriopagopus hainanus (Chinese bird spider).